The chain runs to 487 residues: Malonate-semialdehyde dehydrogenase 2 (487 aa).

Positions 154, 178, 181, 182, and 231 each coordinate NAD(+). Cysteine 286 acts as the Nucleophile in catalysis. Glutamate 386 is a binding site for NAD(+).

This sequence belongs to the aldehyde dehydrogenase family. IolA subfamily. In terms of assembly, homotetramer.

The enzyme catalyses 3-oxopropanoate + NAD(+) + CoA + H2O = hydrogencarbonate + acetyl-CoA + NADH + H(+). The catalysed reaction is 2-methyl-3-oxopropanoate + NAD(+) + CoA + H2O = propanoyl-CoA + hydrogencarbonate + NADH + H(+). It participates in polyol metabolism; myo-inositol degradation into acetyl-CoA; acetyl-CoA from myo-inositol: step 7/7. Its function is as follows. Catalyzes the oxidation of malonate semialdehyde (MSA) and methylmalonate semialdehyde (MMSA) into acetyl-CoA and propanoyl-CoA, respectively. Is involved in a myo-inositol catabolic pathway. Bicarbonate, and not CO2, is the end-product of the enzymatic reaction. This is Malonate-semialdehyde dehydrogenase 2 from Bacillus thuringiensis (strain Al Hakam).